The primary structure comprises 132 residues: Subtelomeric hrmA-associated cluster protein AFUB_079000 (132 aa).

Functionally, part of the subtelomeric hrmA-associated cluster (HAC) containing genes that alter the hyphal surface (such as reduced total chitin or increased beta-glucan exposure) and perturb inter-hyphal interactions within the developing biofilms, resulting in a loss of vertically aligned polarized growing filaments. Consequently, this hypoxia-typic morphotype (called H-MORPH) with altered biofilm architecture leads to increased hypoxia fitness, increased host inflammation, rapid disease progression, and mortality in a murine model of invasive aspergillosis. This Aspergillus fumigatus (strain CBS 144.89 / FGSC A1163 / CEA10) (Neosartorya fumigata) protein is Subtelomeric hrmA-associated cluster protein AFUB_079000.